Consider the following 144-residue polypeptide: Small ribosomal subunit protein bS6 (144 aa).

The tract at residues Lys92–Arg144 is disordered. Over residues Val93–Arg144 the composition is skewed to basic and acidic residues.

It belongs to the bacterial ribosomal protein bS6 family.

In terms of biological role, binds together with bS18 to 16S ribosomal RNA. This Rhodobacter capsulatus (strain ATCC BAA-309 / NBRC 16581 / SB1003) protein is Small ribosomal subunit protein bS6 (rpsF).